Reading from the N-terminus, the 291-residue chain is HTH-type transcriptional regulator DgcR (291 aa).

An HTH lysR-type domain is found at 1 to 58 (MRLRHIEVFHAIYTTGSITNAAKALHVSQPSVSKVLSHAEMQLGFKLFERVKGRLIPT). The H-T-H motif DNA-binding region spans 18–37 (ITNAAKALHVSQPSVSKVLS).

This sequence belongs to the LysR transcriptional regulatory family.

Functionally, transcriptional regulator that positively regulates the expression of the D-Glu gene cluster (DGC). The cluster includes dgcN and dgcA, which are involved in a deamination-independent D-glutamate degradation pathway, dgcR itself, dgcT, dgcP and dgcH. Acts by binding the consensus sequence upstream of dgcR, dgcT, dgcP and dgcH. This chain is HTH-type transcriptional regulator DgcR, found in Pseudoalteromonas sp.